We begin with the raw amino-acid sequence, 426 residues long: Glutamate-1-semialdehyde 2,1-aminomutase (426 aa).

Residue Lys-263 is modified to N6-(pyridoxal phosphate)lysine.

Belongs to the class-III pyridoxal-phosphate-dependent aminotransferase family. HemL subfamily. As to quaternary structure, homodimer. The cofactor is pyridoxal 5'-phosphate.

It localises to the cytoplasm. The enzyme catalyses (S)-4-amino-5-oxopentanoate = 5-aminolevulinate. It participates in porphyrin-containing compound metabolism; protoporphyrin-IX biosynthesis; 5-aminolevulinate from L-glutamyl-tRNA(Glu): step 2/2. This chain is Glutamate-1-semialdehyde 2,1-aminomutase, found in Caldicellulosiruptor bescii (strain ATCC BAA-1888 / DSM 6725 / KCTC 15123 / Z-1320) (Anaerocellum thermophilum).